Here is a 359-residue protein sequence, read N- to C-terminus: MESKGRIHPSHHHMRRPLPGPGGCIAHPETFGNHGAIPPSAAQGVYPSFNMLPPPEVMEQKFVAQHGELQRLAIENQRLGGTHGSLRQELAAAQHEIQMLHAQIGSMKSEREQRMMGLAEKVAKMETELQKSEAVKLEMQQARAEARSLVVAREELMSKVHQLTQELQKSRSDVQQIPALMSELENLRQEYQQCRATYDYEKKFYNDHLESLQAMEKNYMTMAREVEKLQAQLMNNANSDRRAGGPYGNNINAEIDASGHQSGNGYYEDAFGPQGYIPQPVAGNATGPNSVVGAAQYPYQGVTQPGYFPQRPGYNFPRGPPGSYDPTTRLPTGPYGAPFPPGPSNNTPYAGTHGNPSRR.

Residues 1 to 16 are compositionally biased toward basic residues; sequence MESKGRIHPSHHHMRR. A disordered region spans residues 1-27; the sequence is MESKGRIHPSHHHMRRPLPGPGGCIAH. Residues 83–236 are a coiled coil; the sequence is HGSLRQELAA…EKLQAQLMNN (154 aa). The segment at 303-359 is disordered; that stretch reads TQPGYFPQRPGYNFPRGPPGSYDPTTRLPTGPYGAPFPPGPSNNTPYAGTHGNPSRR.

It belongs to the FLX family. As to quaternary structure, interacts with FRI.

Has no transcriptional activation activity. This Arabidopsis thaliana (Mouse-ear cress) protein is Protein FLX-like 2 (FLXL2).